The following is a 383-amino-acid chain: E3 ubiquitin-protein ligase SPL2 (383 aa).

The Cytoplasmic portion of the chain corresponds to 1–14 (MSSPERALLNLLTD). A helical membrane pass occupies residues 15–35 (IALSFDGAILGLTLAVSAVGS). Residues 36–269 (ALKYASTNAA…MIEDLMEQTN (234 aa)) lie on the Chloroplast intermembrane side of the membrane. Residues 270–290 (FIFLGSVILGIVSVGILSYAA) traverse the membrane as a helical segment. Residues 291-383 (VRTWNKWKQW…IRGSMRVYYS (93 aa)) lie on the Cytoplasmic side of the membrane. An RING-type zinc finger spans residues 331 to 370 (CVICVSRRRVPAFIPCGHVVCCRRCASTVERELNPKCPVC).

Its subcellular location is the plastid. It is found in the chloroplast outer membrane. The enzyme catalyses S-ubiquitinyl-[E2 ubiquitin-conjugating enzyme]-L-cysteine + [acceptor protein]-L-lysine = [E2 ubiquitin-conjugating enzyme]-L-cysteine + N(6)-ubiquitinyl-[acceptor protein]-L-lysine.. Its pathway is protein modification; protein ubiquitination. Its function is as follows. Possesses E3 ubiquitin-protein ligase activity. In Arabidopsis thaliana (Mouse-ear cress), this protein is E3 ubiquitin-protein ligase SPL2.